The following is a 174-amino-acid chain: Co-chaperone protein HscB homolog (174 aa).

One can recognise a J domain in the interval 2–74 (NYFELFKFSP…IRRAEHLLSL (73 aa)).

This sequence belongs to the HscB family. Interacts with HscA and stimulates its ATPase activity.

Functionally, co-chaperone involved in the maturation of iron-sulfur cluster-containing proteins. Seems to help targeting proteins to be folded toward HscA. This is Co-chaperone protein HscB homolog from Shewanella sp. (strain W3-18-1).